Reading from the N-terminus, the 122-residue chain is Bet1-like SNARE 1-1 (122 aa).

The Cytoplasmic portion of the chain corresponds to 1–103 (MNPRREPRGG…VFETKSSRRM (103 aa)). Residues 32-94 (EINEHENERA…SGTMDRFKTV (63 aa)) enclose the t-SNARE coiled-coil homology domain. Phosphoserine is present on serine 56. The helical; Anchor for type IV membrane protein transmembrane segment at 104–121 (LTLVASFVGLFLVIYYLT) threads the bilayer. Residue arginine 122 is a topological domain, vesicular.

Belongs to the BET1 family.

The protein localises to the golgi apparatus membrane. It is found in the endoplasmic reticulum membrane. Functionally, required for vesicular transport from the ER to the Golgi complex. Functions as a SNARE associated with ER-derived vesicles. The sequence is that of Bet1-like SNARE 1-1 (BET11) from Arabidopsis thaliana (Mouse-ear cress).